The sequence spans 120 residues: Large ribosomal subunit protein uL18 (120 aa).

This sequence belongs to the universal ribosomal protein uL18 family. Part of the 50S ribosomal subunit; part of the 5S rRNA/L5/L18/L25 subcomplex. Contacts the 5S and 23S rRNAs.

This is one of the proteins that bind and probably mediate the attachment of the 5S RNA into the large ribosomal subunit, where it forms part of the central protuberance. This chain is Large ribosomal subunit protein uL18, found in Staphylococcus carnosus (strain TM300).